Consider the following 689-residue polypeptide: Protein asunder (689 aa).

Positions 521–550 (NGARLKLSKAKDQYRLLYRELEQLIQLNAT) form a coiled coil. Disordered regions lie at residues 591-619 (SPERLEPISSVGASGSSNSNSLLKASKRR) and 669-689 (KDAVTTGASITPNVKEESVRS). The span at 599-614 (SSVGASGSSNSNSLLK) shows a compositional bias: low complexity. Residues 613-619 (LKASKRR) carry the Nuclear localization signal (NLS) motif.

Belongs to the Integrator subunit 13 family. As to quaternary structure, belongs to the multiprotein complex Integrator, at least composed of IntS1, IntS2, IntS3, IntS4, omd/IntS5, IntS6, defl/IntS7, IntS8, IntS9, IntS10, IntS11, IntS12, asun/IntS13, IntS14 and IntS15. The core complex associates with protein phosphatase 2A subunits mts/PP2A and Pp2A-29B, to form the Integrator-PP2A (INTAC) complex. Phosphorylated.

It localises to the nucleus. The protein resides in the cytoplasm. Its subcellular location is the perinuclear region. In terms of biological role, component of the integrator complex, a multiprotein complex that terminates RNA polymerase II (Pol II) transcription in the promoter-proximal region of genes. The integrator complex provides a quality checkpoint during transcription elongation by driving premature transcription termination of transcripts that are unfavorably configured for transcriptional elongation: the complex terminates transcription by (1) catalyzing dephosphorylation of the C-terminal domain (CTD) of Pol II subunit Polr2A/Rbp1 and Spt5, and (2) degrading the exiting nascent RNA transcript via endonuclease activity. The integrator complex is also involved in the 3'-end processing of the U7 snRNA, and also the spliceosomal snRNAs U1, U2, U4 and U5. This is Protein asunder (asun) from Drosophila simulans (Fruit fly).